Here is a 126-residue protein sequence, read N- to C-terminus: MGPLGFVAVGVGAAAGAWLRWGFSVLWNAINPAMPYGTLAANLLGGYLIGLAVGFFDTHAGLPPEWRLLAITGFLGGLTTFSTFSSEVVANLIAGDYGWAAMHLLLHLGGSLLLTALGLWTYRMLA.

The next 4 membrane-spanning stretches (helical) occupy residues 6–26, 36–56, 69–89, and 99–119; these read FVAVGVGAAAGAWLRWGFSVL, YGTLAANLLGGYLIGLAVGFF, LAITGFLGGLTTFSTFSSEVV, and WAAMHLLLHLGGSLLLTALGL. Residues Gly-76 and Thr-79 each coordinate Na(+).

The protein belongs to the fluoride channel Fluc/FEX (TC 1.A.43) family.

It is found in the cell inner membrane. It catalyses the reaction fluoride(in) = fluoride(out). Na(+) is not transported, but it plays an essential structural role and its presence is essential for fluoride channel function. In terms of biological role, fluoride-specific ion channel. Important for reducing fluoride concentration in the cell, thus reducing its toxicity. The sequence is that of Fluoride-specific ion channel FluC from Cupriavidus taiwanensis (strain DSM 17343 / BCRC 17206 / CCUG 44338 / CIP 107171 / LMG 19424 / R1) (Ralstonia taiwanensis (strain LMG 19424)).